Consider the following 511-residue polypeptide: ATP synthase subunit alpha 1 (511 aa).

170–177 serves as a coordination point for ATP; the sequence is GDRQTGKT.

This sequence belongs to the ATPase alpha/beta chains family. In terms of assembly, F-type ATPases have 2 components, CF(1) - the catalytic core - and CF(0) - the membrane proton channel. CF(1) has five subunits: alpha(3), beta(3), gamma(1), delta(1), epsilon(1). CF(0) has three main subunits: a(1), b(2) and c(9-12). The alpha and beta chains form an alternating ring which encloses part of the gamma chain. CF(1) is attached to CF(0) by a central stalk formed by the gamma and epsilon chains, while a peripheral stalk is formed by the delta and b chains.

It localises to the cell inner membrane. The enzyme catalyses ATP + H2O + 4 H(+)(in) = ADP + phosphate + 5 H(+)(out). Functionally, produces ATP from ADP in the presence of a proton gradient across the membrane. The alpha chain is a regulatory subunit. The protein is ATP synthase subunit alpha 1 of Gluconobacter oxydans (strain 621H) (Gluconobacter suboxydans).